The primary structure comprises 927 residues: Probable UDP-N-acetylglucosamine--peptide N-acetylglucosaminyltransferase SPINDLY (927 aa).

A disordered region spans residues 1–31; the sequence is MGRPGMDSSEGRESNGVVPERNGGAVPAKQQ. TPR repeat units lie at residues 34–67, 68–101, 102–135, 143–176, 177–210, 211–244, 252–285, 286–319, 320–353, 355–387, and 388–421; these read GKDT…DEAN, VEAL…DPGN, ACAL…DPSY, AIVL…DSHY, APAY…RPLY, AEAY…SPNF, AIAL…NWHY, ADAM…NPRC, AEAC…KPNF, QSLN…NSTY, and AEAY…DPDS. Positions 422-927 are catalytic region; the sequence is RNAGQNRLLA…KVEANGHISR (506 aa).

The protein belongs to the glycosyltransferase 41 family. O-GlcNAc transferase subfamily.

It is found in the nucleus. The catalysed reaction is L-seryl-[protein] + UDP-N-acetyl-alpha-D-glucosamine = 3-O-(N-acetyl-beta-D-glucosaminyl)-L-seryl-[protein] + UDP + H(+). It carries out the reaction L-threonyl-[protein] + UDP-N-acetyl-alpha-D-glucosamine = 3-O-(N-acetyl-beta-D-glucosaminyl)-L-threonyl-[protein] + UDP + H(+). Its pathway is protein modification; protein glycosylation. Probable O-linked N-acetylglucosamine transferase (OGT) involved in various processes such as gibberellin (GA) signaling pathway. OGTs catalyze the addition of nucleotide-activated sugars directly onto the polypeptide through O-glycosidic linkage with the hydroxyl of serine or threonine. Probably acts by adding O-linked sugars to yet unknown proteins. In Oryza sativa subsp. japonica (Rice), this protein is Probable UDP-N-acetylglucosamine--peptide N-acetylglucosaminyltransferase SPINDLY (SPY).